The primary structure comprises 798 residues: uncharacterized protein (798 aa).

The segment at 432–573 (KLTDNLSNKS…KNKAYRGRRV (142 aa)) is disordered. Composition is skewed to low complexity over residues 438–449 (SNKSSNDNTSET), 456–465 (RSSNSRNSDN), 473–487 (SKTQ…SRIP), and 495–510 (STNS…SDVY). Over residues 519 to 529 (PSRSTYKSRTI) the composition is skewed to polar residues. The segment covering 535–547 (ESSPVSSRTSSPV) has biased composition (low complexity). Residues 548–562 (DDSRLKQSRISEDKP) show a composition bias toward basic and acidic residues. Basic residues predominate over residues 563-572 (RKNKAYRGRR).

Its subcellular location is the virion. This is an uncharacterized protein from Acanthamoeba polyphaga (Amoeba).